A 236-amino-acid chain; its full sequence is Phosphoribosylaminoimidazole-succinocarboxamide synthase (236 aa).

Belongs to the SAICAR synthetase family.

The catalysed reaction is 5-amino-1-(5-phospho-D-ribosyl)imidazole-4-carboxylate + L-aspartate + ATP = (2S)-2-[5-amino-1-(5-phospho-beta-D-ribosyl)imidazole-4-carboxamido]succinate + ADP + phosphate + 2 H(+). Its pathway is purine metabolism; IMP biosynthesis via de novo pathway; 5-amino-1-(5-phospho-D-ribosyl)imidazole-4-carboxamide from 5-amino-1-(5-phospho-D-ribosyl)imidazole-4-carboxylate: step 1/2. The protein is Phosphoribosylaminoimidazole-succinocarboxamide synthase of Streptococcus equi subsp. zooepidemicus (strain MGCS10565).